The following is a 139-amino-acid chain: Putative nickel-responsive regulator (139 aa).

Ni(2+)-binding residues include His-79, His-90, His-92, and Cys-98.

Belongs to the transcriptional regulatory CopG/NikR family. The cofactor is Ni(2+).

Its function is as follows. Transcriptional regulator. The sequence is that of Putative nickel-responsive regulator from Lawsonia intracellularis (strain PHE/MN1-00).